A 455-amino-acid polypeptide reads, in one-letter code: Vimentin (455 aa).

The interval 1–87 (MASRTNTSSY…GLADAINTEF (87 aa)) is head. Residues 87-122 (FKTNRTNEKAEMQHLNDRFASYIDKVRFLEQQNKIL) adopt a coiled-coil conformation. Positions 88-122 (KTNRTNEKAEMQHLNDRFASYIDKVRFLEQQNKIL) are coil 1A. The 309-residue stretch at 94-402 (EKAEMQHLND…KLLEGEESRI (309 aa)) folds into the IF rod domain. Positions 123–144 (IAELEQMRGKGSSRVGDLYQDE) are linker 1. Residues 145–236 (MRELRRQVDQ…KLHDEELAEL (92 aa)) are a coiled coil. The segment at 145 to 236 (MRELRRQVDQ…KLHDEELAEL (92 aa)) is coil 1B. The tract at residues 237–259 (QIQIQEQHVQIDMEVAKPDLTAA) is linker 12. A coil 2 region spans residues 260-398 (LKDVRQQYET…ATYRKLLEGE (139 aa)). The stretch at 294–398 (ARNNEAIRLA…ATYRKLLEGE (105 aa)) forms a coiled coil. A tail region spans residues 399-455 (ESRITTPFPNLSSLTLRETMKETRPAMDSLSKKVVIKTIETRDGHIINESSQNDDLE).

The protein belongs to the intermediate filament family. In terms of assembly, homomer assembled from elementary dimers. Post-translationally, one of the most prominent phosphoproteins in various cells of mesenchymal origin. Phosphorylation is enhanced during cell division, at which time vimentin filaments are significantly reorganized.

Its subcellular location is the cytoplasm. It is found in the cytoskeleton. The protein resides in the nucleus matrix. Vimentins are class-III intermediate filaments found in various non-epithelial cells, especially mesenchymal cells. Vimentin is attached to the nucleus, endoplasmic reticulum, and mitochondria, either laterally or terminally. The chain is Vimentin (vim) from Cyprinus carpio (Common carp).